Consider the following 337-residue polypeptide: uncharacterized protein (337 aa).

The 231-residue stretch at 5 to 235 folds into the ABC transporter domain; the sequence is VEFDNVSRLY…PRTPFVAGFV (231 aa). An ATP-binding site is contributed by 37–44; the sequence is GPSGSGKT.

It belongs to the ABC transporter superfamily.

In terms of biological role, probably part of the ABC transporter complex YdcSTUV. Probably responsible for energy coupling to the transport system. This is an uncharacterized protein from Escherichia coli (strain K12).